The sequence spans 228 residues: UPF0173 metal-dependent hydrolase lwe1590 (228 aa).

Belongs to the UPF0173 family.

This chain is UPF0173 metal-dependent hydrolase lwe1590, found in Listeria welshimeri serovar 6b (strain ATCC 35897 / DSM 20650 / CCUG 15529 / CIP 8149 / NCTC 11857 / SLCC 5334 / V8).